The primary structure comprises 462 residues: Ubiquitin carboxyl-terminal hydrolase calypso (462 aa).

Positions 29–260 (GWLELESDPG…IRFNLMAVVP (232 aa)) constitute a UCH catalytic domain. Catalysis depends on C115, which acts as the Nucleophile. H197 (proton donor) is an active-site residue. Residues 357-385 (NYDKFICTFLTMLAHQGVLGELVSQHLLP) form the ULD domain. The tract at residues 387 to 462 (KKISGQSAAN…KGRNKCRKRK (76 aa)) is positively charged C-terminal tail required for binding nucleosomes. Residues 394–462 (AANRLNKQNS…KGRNKCRKRK (69 aa)) form a disordered region. Residues 399–447 (NKQNSAAASTANSSAGATAGGAKSQQQQQQQQQPQQPQTPKNGKSPGKT) are compositionally biased toward low complexity. The segment covering 448–462 (PGRRRKGRNKCRKRK) has biased composition (basic residues).

The protein belongs to the peptidase C12 family. BAP1 subfamily. Catalytic component of the polycomb repressive deubiquitinase (PR-DUB) complex, at least composed of caly/calypso, Asx and sba (MBD5/6 homolog). The PR-DUB complex associates with nucleosomes to mediate deubiquitination of histone H2AK118ub1 substrates; the association requires the positively charged C-terminal tail of caly, probably due to direct binding of DNA. Interacts (via ULD domain) with Asx (via DEUBAD domain); the interaction produces a stable heterodimer with a composite binding site for ubiquitin. Homodimerizes (via coiled-coil hinge-region between the UCH and ULD domains) to mediate assembly of 2 copies of the caly-Asx heterodimer into a bisymmetric tetramer; dimerization enhances PR-DUB association with nucleosomes.

It is found in the nucleus. It carries out the reaction Thiol-dependent hydrolysis of ester, thioester, amide, peptide and isopeptide bonds formed by the C-terminal Gly of ubiquitin (a 76-residue protein attached to proteins as an intracellular targeting signal).. Its function is as follows. Catalytic component of the polycomb repressive deubiquitinase (PR-DUB) complex, a complex that specifically mediates deubiquitination of histone H2A monoubiquitinated at 'Lys-119' (H2AK118ub1). Mediates bisymmetric organization of the PR-DUB complex and is involved in association with nucleosomes to mediate deubiquitination. Does not deubiquitinate monoubiquitinated histone H2B. Required to maintain the transcriptionally repressive state of homeotic genes throughout development. The PR-DUB complex has weak or no activity toward 'Lys-48'- and 'Lys-63'-linked polyubiquitin chains. Polycomb group (PcG) protein. This Drosophila virilis (Fruit fly) protein is Ubiquitin carboxyl-terminal hydrolase calypso.